The primary structure comprises 370 residues: Pantothenate kinase 3 (370 aa).

E138 (proton acceptor) is an active-site residue. S192, S195, and R207 together coordinate acetyl-CoA.

It belongs to the type II pantothenate kinase family. In terms of assembly, homodimer. In terms of tissue distribution, highly expressed in the liver.

The protein localises to the cytoplasm. The enzyme catalyses (R)-pantothenate + ATP = (R)-4'-phosphopantothenate + ADP + H(+). Its pathway is cofactor biosynthesis; coenzyme A biosynthesis; CoA from (R)-pantothenate: step 1/5. Its activity is regulated as follows. Subject to allosteric regulation, exists in two distinct conformational states, a catalytically incompetent (or open) conformation stabilized by the binding of acetyl(acyl)-CoA, and a catalytically competent (or closed) conformation stabilized by ATP-binding. Inhibited by acetyl-CoA and its thioesters which act as allosteric inhibitors and compete with the ATP-binding site. Inhibited by sulfonylureas and thiazolidinediones. Activated by oleoylethanolamide, palmitoyl-carnitine and oleoyl-carnitine. In terms of biological role, catalyzes the phosphorylation of pantothenate to generate 4'-phosphopantothenate in the first and rate-determining step of coenzyme A (CoA) synthesis. This Homo sapiens (Human) protein is Pantothenate kinase 3 (PANK3).